Consider the following 530-residue polypeptide: Phosphoenolpyruvate carboxykinase (ATP) (530 aa).

Residues Arg57, Tyr193, and Lys199 each contribute to the substrate site. Residues Lys199, His218, and 234–242 each bind ATP; that span reads GLSGTGKTT. Mn(2+) contacts are provided by Lys199 and His218. Asp255 lines the Mn(2+) pocket. Glu283, Arg320, and Thr445 together coordinate ATP. Arg320 is a substrate binding site.

Belongs to the phosphoenolpyruvate carboxykinase (ATP) family. Requires Mn(2+) as cofactor.

It is found in the cytoplasm. The catalysed reaction is oxaloacetate + ATP = phosphoenolpyruvate + ADP + CO2. Its pathway is carbohydrate biosynthesis; gluconeogenesis. Its function is as follows. Involved in the gluconeogenesis. Catalyzes the conversion of oxaloacetate (OAA) to phosphoenolpyruvate (PEP) through direct phosphoryl transfer between the nucleoside triphosphate and OAA. The protein is Phosphoenolpyruvate carboxykinase (ATP) of Leptospira interrogans serogroup Icterohaemorrhagiae serovar copenhageni (strain Fiocruz L1-130).